The chain runs to 269 residues: GTP cyclohydrolase FolE2 (269 aa).

It belongs to the GTP cyclohydrolase IV family.

The enzyme catalyses GTP + H2O = 7,8-dihydroneopterin 3'-triphosphate + formate + H(+). It participates in cofactor biosynthesis; 7,8-dihydroneopterin triphosphate biosynthesis; 7,8-dihydroneopterin triphosphate from GTP: step 1/1. In terms of biological role, converts GTP to 7,8-dihydroneopterin triphosphate. This Thiobacillus denitrificans (strain ATCC 25259 / T1) protein is GTP cyclohydrolase FolE2.